The sequence spans 314 residues: Regulator of microtubule dynamics protein 1 (314 aa).

N6-succinyllysine is present on Lys165. TPR repeat units lie at residues Ala168–Asp204 and Pro222–Phe258.

It belongs to the RMDN family. As to quaternary structure, interacts with microtubules.

The protein localises to the cytoplasm. Its subcellular location is the cytoskeleton. The protein resides in the spindle. It is found in the spindle pole. In Homo sapiens (Human), this protein is Regulator of microtubule dynamics protein 1 (RMDN1).